Consider the following 778-residue polypeptide: MSLGTTDIASETGDDSLSAITFESDIESKTKRKSFHKPPSTSPKSPYYSKPRKVTSWRSLKTAGSMPLSSRMSLTPQKLWLGSSKQGSVAQPPSPTLTSEHAWTHPPSCTPDYLTEAVRAKRADLRRSGSHGHVSGTSVYREKEDMYDEIIELKKSLHMQKSDVDLMRTKLRRLEEENSRKDRQIEQLLDPSRGPDFVRTLAEKKPDTGWVITGLKQRIFRLEQQCKEKDNTINKLQTDMKTTNLEEMRIAMETYYEEIHRLQTLLASSEATGKKPMVEKKLGVKRQKKMSSALLNLTRSVQELTEENQSLKEDLDRMLSNSPTISKIKGYGDWSKPRLLRRIAELEKKVSSSESPKQSTSELVNPNPLVRSPSNISVQKQPKGDQSPEDLPKVAPCEEQEHLQGTVKSLREELGALQEQLLEKDLEMKQLLQSKIDLEKELETAREGEKGRQEQEQALREEVEALTKKCQELEEAKREEKNSFVAVTHEAHPELHAPSPCSRHSEPDSDNSAGEEGSSQPPAPCSEERREAAIRTLQAQWKAHRRKKREAALDEAATVLQAAFRGHLARSKLVRSKVPDSRSPSLPGLLSPLNQSSPAPRVLSPISPAEENPTQEEAVIVIQSILRGYLAQARFIASCCREIAASSQRETVSLTPSGSASPPSLRASPGVIRKELCASEELRETSASEPAPSVPYSAQGGHGDCPSSSSLEAVPSMKDAMCEERSSSPRSAGPSLAEPSPPELQPLSPPPVEDICSDDSDDIIFSPFLPRKKSPSPF.

Disordered regions lie at residues 1–71 and 83–108; these read MSLG…LSSR and SSKQ…HPPS. Low complexity predominate over residues 37 to 49; the sequence is KPPSTSPKSPYYS. Over residues 83-101 the composition is skewed to polar residues; it reads SSKQGSVAQPPSPTLTSEH. Residues 157-323 adopt a coiled-coil conformation; sequence LHMQKSDVDL…DLDRMLSNSP (167 aa). A Phosphoserine modification is found at serine 322. 4 disordered regions span residues 348-392, 443-462, 474-529, and 573-612; these read KKVS…EDLP, ETAR…LREE, EEAK…SEER, and LVRS…AEEN. Residues 352–362 are compositionally biased toward low complexity; sequence SSESPKQSTSE. The stretch at 398–486 forms a coiled coil; that stretch reads EEQEHLQGTV…KREEKNSFVA (89 aa). IQ domains lie at 553–582 and 615–644; these read LDEA…PDSR and QEEA…REIA. Over residues 581 to 598 the composition is skewed to low complexity; sequence SRSPSLPGLLSPLNQSSP. Over residues 651–662 the composition is skewed to polar residues; sequence TVSLTPSGSASP. A disordered region spans residues 651–778; it reads TVSLTPSGSA…LPRKKSPSPF (128 aa). Serine 661 bears the Phosphoserine mark. A compositionally biased stretch (basic and acidic residues) spans 672 to 686; that stretch reads IRKELCASEELRETS. Over residues 739-752 the composition is skewed to pro residues; sequence PSPPELQPLSPPPV.

In terms of assembly, component of the EvC complex composed of EFCAB7, IQCE, EVC2 and EVC; built from two subcomplexes, EVC2:EVC and EFCAB7:IQCE. Interacts (via N-terminus) with EFCAB7 (via EF-hands 1 and 2); this interaction anchors the EVC-EVC2 complex in a signaling microdomain at the base of cilia and stimulates the Hedgehog (Hh) pathway. Interacts with EVC2 (via N-terminal end). Interacts with EVC.

The protein resides in the cell projection. It localises to the cilium membrane. Its function is as follows. Component of the EvC complex that positively regulates ciliary Hedgehog (Hh) signaling. Required for proper limb morphogenesis. This chain is IQ domain-containing protein E (Iqce), found in Mus musculus (Mouse).